The primary structure comprises 876 residues: Alanine--tRNA ligase (876 aa).

Positions 564, 568, 666, and 670 each coordinate Zn(2+).

Belongs to the class-II aminoacyl-tRNA synthetase family. Homotetramer. Zn(2+) serves as cofactor.

It is found in the cytoplasm. It carries out the reaction tRNA(Ala) + L-alanine + ATP = L-alanyl-tRNA(Ala) + AMP + diphosphate. Its function is as follows. Catalyzes the attachment of alanine to tRNA(Ala) in a two-step reaction: alanine is first activated by ATP to form Ala-AMP and then transferred to the acceptor end of tRNA(Ala). Also edits incorrectly charged Ser-tRNA(Ala) and Gly-tRNA(Ala) via its editing domain. The chain is Alanine--tRNA ligase from Salmonella paratyphi A (strain ATCC 9150 / SARB42).